We begin with the raw amino-acid sequence, 903 residues long: HTH-type transcriptional regulator MalT (903 aa).

39 to 46 contributes to the ATP binding site; that stretch reads CPAGYGKT. Residues 832–897 enclose the HTH luxR-type domain; the sequence is ELIRTSPLTQ…EAVQQAQRLL (66 aa). The segment at residues 856 to 875 is a DNA-binding region (H-T-H motif); sequence NDQIANELDVAATTIKTHIR.

Belongs to the MalT family. In terms of assembly, monomer in solution. Oligomerizes to an active state in the presence of the positive effectors ATP and maltotriose.

Its activity is regulated as follows. Activated by ATP and maltotriose, which are both required for DNA binding. Positively regulates the transcription of the maltose regulon whose gene products are responsible for uptake and catabolism of malto-oligosaccharides. Specifically binds to the promoter region of its target genes, recognizing a short DNA motif called the MalT box. This Yersinia pseudotuberculosis serotype O:1b (strain IP 31758) protein is HTH-type transcriptional regulator MalT.